Consider the following 197-residue polypeptide: Proteasome subunit beta 1 (197 aa).

A propeptide spans 1 to 6 (removed in mature form; by autocatalysis); sequence MNRKTG. The active-site Nucleophile is the Thr-7.

This sequence belongs to the peptidase T1B family. The 20S proteasome core is composed of 14 alpha and 14 beta subunits that assemble into four stacked heptameric rings, resulting in a barrel-shaped structure. The two inner rings, each composed of seven catalytic beta subunits, are sandwiched by two outer rings, each composed of seven alpha subunits. The catalytic chamber with the active sites is on the inside of the barrel. Has a gated structure, the ends of the cylinder being occluded by the N-termini of the alpha-subunits. Is capped at one or both ends by the proteasome regulatory ATPase, PAN.

The protein localises to the cytoplasm. The enzyme catalyses Cleavage of peptide bonds with very broad specificity.. Its activity is regulated as follows. The formation of the proteasomal ATPase PAN-20S proteasome complex, via the docking of the C-termini of PAN into the intersubunit pockets in the alpha-rings, triggers opening of the gate for substrate entry. Interconversion between the open-gate and close-gate conformations leads to a dynamic regulation of the 20S proteasome proteolysis activity. In terms of biological role, component of the proteasome core, a large protease complex with broad specificity involved in protein degradation. This is Proteasome subunit beta 1 from Pyrococcus abyssi (strain GE5 / Orsay).